A 240-amino-acid polypeptide reads, in one-letter code: 2,3,4,5-tetrahydropyridine-2,6-dicarboxylate N-acetyltransferase (240 aa).

This sequence belongs to the transferase hexapeptide repeat family. DapH subfamily.

It catalyses the reaction (S)-2,3,4,5-tetrahydrodipicolinate + acetyl-CoA + H2O = L-2-acetamido-6-oxoheptanedioate + CoA. It participates in amino-acid biosynthesis; L-lysine biosynthesis via DAP pathway; LL-2,6-diaminopimelate from (S)-tetrahydrodipicolinate (acetylase route): step 1/3. Its function is as follows. Catalyzes the transfer of an acetyl group from acetyl-CoA to tetrahydrodipicolinate. This is 2,3,4,5-tetrahydropyridine-2,6-dicarboxylate N-acetyltransferase from Staphylococcus epidermidis (strain ATCC 35984 / DSM 28319 / BCRC 17069 / CCUG 31568 / BM 3577 / RP62A).